The primary structure comprises 84 residues: MNIFDFFRDRKKESTASVAKERLQIIVAHERGQRSTPDYLPALQKELVEVIRKYVNIESDQVQVALESQGSCSILELNITLPDR.

This sequence belongs to the MinE family.

Its function is as follows. Prevents the cell division inhibition by proteins MinC and MinD at internal division sites while permitting inhibition at polar sites. This ensures cell division at the proper site by restricting the formation of a division septum at the midpoint of the long axis of the cell. The polypeptide is Cell division topological specificity factor (Pseudomonas syringae pv. tomato (strain ATCC BAA-871 / DC3000)).